The following is a 681-amino-acid chain: GAS2-like protein 1 (681 aa).

Alanine 2 is modified (N-acetylalanine). Positions 27–148 (EAMKEDLAEW…CLLEVARRGA (122 aa)) constitute a Calponin-homology (CH) domain. Disordered stretches follow at residues 168 to 204 (LRAAPPAPNAPAAGEDTTETAPAPGTPARGPRMTPSD), 278 to 509 (STAH…PLQL), and 536 to 681 (ASVT…DSWM). Residues 186–199 (ETAPAPGTPARGPR) show a composition bias toward low complexity. Residue threonine 193 is modified to Phosphothreonine. The region spanning 203-275 (SDLRNLDELV…HYLDKHDPCR (73 aa)) is the GAR domain. Positions 291–303 (FSPQRVSPTTSPR) are enriched in polar residues. A phosphoserine mark is found at serine 306 and serine 316. A compositionally biased stretch (basic and acidic residues) spans 327–342 (STKEGPETPPRPRDQL). Position 334 is a phosphothreonine (threonine 334). Phosphoserine is present on residues serine 352 and serine 355. Low complexity predominate over residues 354–365 (DSDSSASSAQSG). The segment covering 370 to 381 (RSDDTGTGPRRE) has biased composition (basic and acidic residues). Phosphothreonine is present on threonine 391. Residue serine 394 is modified to Phosphoserine. Over residues 404 to 413 (QSRDRLDRGR) the composition is skewed to basic and acidic residues. 4 positions are modified to phosphoserine: serine 436, serine 438, serine 479, and serine 486. A compositionally biased stretch (basic and acidic residues) spans 437–454 (QSREEQAVLLVRRDRDGQ). Low complexity predominate over residues 475–493 (PRARSPAAPRLSRVSSPSP). Position 487 is an omega-N-methylarginine (arginine 487). Phosphoserine is present on residues serine 490 and serine 492. Residue threonine 498 is modified to Phosphothreonine. The residue at position 504 (arginine 504) is an Omega-N-methylarginine. Residues 542 to 556 (GPVPDPARAPDPPAP) are compositionally biased toward pro residues. Positions 557–571 (DSAYCSSSSSSSSLS) are enriched in low complexity. The residue at position 633 (arginine 633) is an Omega-N-methylarginine. Over residues 634–644 (GRMDTQPDRKP) the composition is skewed to basic and acidic residues. Position 657 is a phosphoserine (serine 657).

This sequence belongs to the GAS2 family. Interacts with MAPRE1.

The protein resides in the cytoplasm. Its subcellular location is the cytoskeleton. It is found in the stress fiber. Functionally, involved in the cross-linking of microtubules and microfilaments. Regulates microtubule dynamics and stability by interacting with microtubule plus-end tracking proteins, such as MAPRE1, to regulate microtubule growth along actin stress fibers. The sequence is that of GAS2-like protein 1 (GAS2L1) from Homo sapiens (Human).